The primary structure comprises 424 residues: SNF1-related protein kinase regulatory subunit gamma-1 (424 aa).

Position 2 is an N-acetylalanine (Ala-2). Ser-44 bears the Phosphoserine mark. CBS domains follow at residues 63–131, 185–244, 263–324, and 350–408; these read LSSD…EPPS, TFRW…CAGL, MSKD…YHDY, and IMSG…SGYF.

The protein belongs to the 5'-AMP-activated protein kinase gamma subunit family. Subunit of a probable heterotrimeric complex consisting of an alpha catalytic (KIN10 or KIN11) subunit, and a beta (KINB) and a gamma (KING or SNF4) non-catalytic regulatory subunits. Interacts with HXK1 in mitochondrion. In terms of processing, sumoylated by SIZ1. Expressed in vegetative organs and, to lower extent, in reproductive organs.

Its subcellular location is the mitochondrion. Its function is as follows. Regulatory subunit of the probable trimeric SNF1-related protein kinase (SnRK) complex, which may play a role in a signal transduction cascade regulating gene expression and carbohydrate metabolism in higher plants. The SnRK complex may also be involved in the regulation of fatty acid synthesis by phosphorylation of acetyl-CoA carboxylase and in assimilation of nitrogen by phosphorylating nitrate reductase. In Arabidopsis thaliana (Mouse-ear cress), this protein is SNF1-related protein kinase regulatory subunit gamma-1 (KING1).